The following is a 203-amino-acid chain: Somatotropin (203 aa).

Residues 1–17 form the signal peptide; sequence MNRVILLLSVMCVGVSS. Q18 is subject to Pyrrolidone carboxylic acid. 2 disulfide bridges follow: C68–C176 and C193–C201.

Belongs to the somatotropin/prolactin family.

It localises to the secreted. Functionally, growth hormone plays an important role in growth control and is involved in the regulation of several anabolic processes. Implicated as an osmoregulatory substance important for seawater adaptation. This chain is Somatotropin (gh), found in Verasper variegatus (Spotted flounder).